A 469-amino-acid chain; its full sequence is DNA-binding transcriptional regulator NtrC (469 aa).

One can recognise a Response regulatory domain in the interval 5 to 119; that stretch reads IVWVVDDDSS…EAVALVERAI (115 aa). At Asp54 the chain carries 4-aspartylphosphate. Residues 140–369 form the Sigma-54 factor interaction domain; sequence MIGEAPAMQD…LENTCRWLTV (230 aa). ATP is bound by residues 168–175 and 231–240; these read GESGTGKE and ADGGTLFLDE. A DNA-binding region (H-T-H motif) is located at residues 445-464; sequence KQEAARLLGWGRNTLTRKLK.

Post-translationally, phosphorylated and dephosphorylated by NtrB.

It localises to the cytoplasm. Member of the two-component regulatory system NtrB/NtrC, which controls expression of the nitrogen-regulated (ntr) genes in response to nitrogen limitation. Phosphorylated NtrC binds directly to DNA and stimulates the formation of open promoter-sigma54-RNA polymerase complexes. The chain is DNA-binding transcriptional regulator NtrC (glnG) from Salmonella typhimurium (strain LT2 / SGSC1412 / ATCC 700720).